Here is a 101-residue protein sequence, read N- to C-terminus: Hg-scorpine-like-2 (101 aa).

The first 17 residues, 1 to 17 (MKLTILILLVITSFCSC), serve as a signal peptide directing secretion. The 41-residue stretch at 60–100 (QQLCMFNKDVAGWCEKSCQQSAHQKGYCHGTKCKCGIPLNY) folds into the BetaSPN-type CS-alpha/beta domain. 3 cysteine pairs are disulfide-bonded: Cys63–Cys87, Cys73–Cys92, and Cys77–Cys94.

It belongs to the long chain scorpion toxin family. Class 3 subfamily. Expressed by the venom gland.

The protein localises to the secreted. In terms of biological role, inhibits voltage-gated potassium channels. The sequence is that of Hg-scorpine-like-2 from Hoffmannihadrurus gertschi (Scorpion).